Reading from the N-terminus, the 166-residue chain is Protein TIFY 11e (166 aa).

The Tify domain maps to 65-100; it reads ASSAAAQMTIFYGGRVLVLDECPADRAAALLRLAAS. Positions 123 to 148 match the Jas motif; that stretch reads PVARKASLQRFMEKRKGRLAARGQPY. A Nuclear localization signal motif is present at residues 125–132; the sequence is ARKASLQR.

Belongs to the TIFY/JAZ family. Ubiquitinated. Targeted for degradation by the SCF(COI1) E3 ubiquitin ligase-proteasome pathway during jasmonate signaling.

The protein resides in the nucleus. Its function is as follows. Repressor of jasmonate responses. The protein is Protein TIFY 11e of Oryza sativa subsp. japonica (Rice).